A 142-amino-acid chain; its full sequence is ATP synthase F(0) complex subunit C3, mitochondrial (142 aa).

A mitochondrion-targeting transit peptide spans 1 to 67; sequence MFACAKLACT…REFQTSAISR (67 aa). Residues 83–103 form a helical membrane-spanning segment; it reads VGVAGSGAGIGTVFGSLIIGY. N6,N6,N6-trimethyllysine is present on Lys110. The chain crosses the membrane as a helical span at residues 118–138; it reads ILGFALSEAMGLFCLMVAFLI.

The protein belongs to the ATPase C chain family. F-type ATPases have 2 components, CF(1) - the catalytic core - and CF(0) - the membrane proton channel. CF(1) has five subunits: alpha(3), beta(3), gamma(1), delta(1), epsilon(1). CF(0) has three main subunits: a, b and c. Interacts with TMEM70 and TMEM242. In terms of processing, trimethylated by ATPSCKMT at Lys-110. Methylation is required for proper incorporation of the C subunit into the ATP synthase complex and mitochondrial respiration.

The protein resides in the mitochondrion membrane. Functionally, mitochondrial membrane ATP synthase (F(1)F(0) ATP synthase or Complex V) produces ATP from ADP in the presence of a proton gradient across the membrane which is generated by electron transport complexes of the respiratory chain. F-type ATPases consist of two structural domains, F(1) - containing the extramembraneous catalytic core and F(0) - containing the membrane proton channel, linked together by a central stalk and a peripheral stalk. During catalysis, ATP synthesis in the catalytic domain of F(1) is coupled via a rotary mechanism of the central stalk subunits to proton translocation. Part of the complex F(0) domain. A homomeric c-ring of probably 10 subunits is part of the complex rotary element. The sequence is that of ATP synthase F(0) complex subunit C3, mitochondrial from Homo sapiens (Human).